Reading from the N-terminus, the 367-residue chain is MGFTSRGNPSFLFFFFFFLCLSTVSAYINSTSSNNDEVRRELASGRCNWFRGNWVYDVKYPLYDPYKCPFIDPQFNCKKYGRPDNAYLKYRWQPSSCSLPRFNGLYFLRRMRGKKIMFVGDSLSTNMWQSLACLIHSWVPNTRYTLIRQKGLASLTFEEYGVTLLLYRTQFLVDLNVEKVGRVLKLDSIKQGNMWRGMDVLIFNSWHWWTHTEHIQPWDYMEDGNRLYKDMNRLVAFYKGMTTWARWVNAYVDPSKTKVFFNGVSPTHYEGKDWGEPMNSCRSQTQPFYGRKYPGGTPMAWVILNKVMRRLKKPVHWLDITGLSQLRKDAHPSAFSGNHPGNDCSHWCLPGLPDTWNLLFYSTLFSS.

The helical; Signal-anchor for type II membrane protein transmembrane segment at 7-29 (GNPSFLFFFFFFLCLSTVSAYIN) threads the bilayer. Residues 120–122 (GDS) carry the GDS motif motif. The short motif at 343–357 (DCSHWCLPGLPDTWN) is the DCXHWCLPGXXDXWN motif element.

The protein belongs to the PC-esterase family. TBL subfamily.

It is found in the membrane. Functionally, may act as a bridging protein that binds pectin and other cell wall polysaccharides. Probably involved in maintaining esterification of pectins. May be involved in the specific O-acetylation of cell wall polymers. This Arabidopsis thaliana (Mouse-ear cress) protein is Protein trichome birefringence-like 39 (TBL39).